The chain runs to 167 residues: Large ribosomal subunit protein uL23 (167 aa).

The segment at 1–118 (MNVNEIIKGP…TEEKAKIAKK (118 aa)) is large ribosomal subunit protein uL23. 2 disordered regions span residues 91–112 (FEDESPQDQKDSETVSENTEEK) and 136–167 (KQAELAKKDSETNENQEKRIENQTENQENSAN). Composition is skewed to basic and acidic residues over residues 97-112 (QDQKDSETVSENTEEK) and 136-157 (KQAELAKKDSETNENQEKRIEN). Residues 119 to 167 (KAELEAKNKEIAEKLAKKQAELAKKDSETNENQEKRIENQTENQENSAN) are unknown. A compositionally biased stretch (polar residues) spans 158-167 (QTENQENSAN).

It belongs to the universal ribosomal protein uL23 family. In terms of assembly, part of the 50S ribosomal subunit. Contacts protein L29, and trigger factor when it is bound to the ribosome.

Functionally, one of the early assembly proteins it binds 23S rRNA. One of the proteins that surrounds the polypeptide exit tunnel on the outside of the ribosome. Forms the main docking site for trigger factor binding to the ribosome. The protein is Large ribosomal subunit protein uL23 of Mesomycoplasma hyopneumoniae (strain J / ATCC 25934 / NCTC 10110) (Mycoplasma hyopneumoniae).